The sequence spans 248 residues: Probable transcriptional regulatory protein RPB_4273 (248 aa).

The segment at 1–22 (MAGHSQFKNIMHRKGKQDAQRS) is disordered.

It belongs to the TACO1 family.

Its subcellular location is the cytoplasm. The sequence is that of Probable transcriptional regulatory protein RPB_4273 from Rhodopseudomonas palustris (strain HaA2).